Here is a 366-residue protein sequence, read N- to C-terminus: N-acetyl-L-citrulline deacetylase (366 aa).

2 residues coordinate Co(2+): histidine 72 and aspartate 103. The active-site Proton donor/acceptor is glutamate 130. A Co(2+)-binding site is contributed by glutamate 155.

This sequence belongs to the peptidase M20A family. N-acetylcitrulline deacetylase subfamily. In terms of assembly, forms homodimers in the crystal, but higher order oligomers may form in solution. Co(2+) serves as cofactor.

It carries out the reaction N(2)-acetyl-L-citrulline + H2O = L-citrulline + acetate. It catalyses the reaction N(2)-acetyl-L-ornithine + H2O = L-ornithine + acetate. It functions in the pathway amino-acid biosynthesis; L-arginine biosynthesis. Catalyzes the deacetylation of N-acetyl-L-citrulline to produce L-citrulline. This is a step in an alternative arginine biosynthesis pathway. Is also able to catalyze the deacetylation of N-acetylornithine in vitro, with almost equal velocity. However, this reaction may be not relevant in vivo since Xanthomonas does not possess the canonical argF gene and cannot convert ornithine to citrulline via ArgF'. This chain is N-acetyl-L-citrulline deacetylase, found in Xanthomonas campestris pv. campestris (strain ATCC 33913 / DSM 3586 / NCPPB 528 / LMG 568 / P 25).